The chain runs to 436 residues: Proline transporter 3 (436 aa).

Helical transmembrane passes span 29-49 (SWFQAAFVLTTSINSAYVLGY), 52-72 (TVMVPLGWIGGVVGLILATAI), 118-138 (LFMINCGFIILAGSALKAVYV), 151-171 (FIAIAGLICAVFAIGIPHLSA), 172-192 (LGIWLAVSTILSLIYIVVAIV), 216-236 (LFTITGAAATLVFVFNTGMLP), 254-274 (LYFQFTVGVLPMFAVVFIGYW), 296-316 (ALANISAILQSVISLHIFASP), 345-365 (GGYIAVSTLLSALLPFLGDFM), 366-386 (SLTGAVSTFPLTFILANHMYY), and 405-425 (VVFFSLMSVAAAIAALRLIAL).

This sequence belongs to the amino acid/polyamine transporter 2 family. Amino acid/auxin permease (AAAP) (TC 2.A.18.3) subfamily. In terms of tissue distribution, expressed in epidermal cells of leaves, sepals and petals.

The protein localises to the cell membrane. Functionally, proline transporter that mediates proline and glycine betaine transport. When expressed in a heterologous system (yeast), imports L-proline, glycine betaine and GABA across the plasma membrane. The chain is Proline transporter 3 (PROT3) from Arabidopsis thaliana (Mouse-ear cress).